The chain runs to 210 residues: Large ribosomal subunit protein uL4 (210 aa).

Residues 41 to 51 show a composition bias toward polar residues; it reads ANARQGTQSTK. Disordered regions lie at residues 41-60 and 67-98; these read ANARQGTQSTKTRGEVQGSS and KGTGNARMGTNRSPVRRHGGVAFGPRPRDFSK.

This sequence belongs to the universal ribosomal protein uL4 family. Part of the 50S ribosomal subunit.

One of the primary rRNA binding proteins, this protein initially binds near the 5'-end of the 23S rRNA. It is important during the early stages of 50S assembly. It makes multiple contacts with different domains of the 23S rRNA in the assembled 50S subunit and ribosome. In terms of biological role, forms part of the polypeptide exit tunnel. This Dehalococcoides mccartyi (strain ATCC BAA-2100 / JCM 16839 / KCTC 5957 / BAV1) protein is Large ribosomal subunit protein uL4.